A 163-amino-acid chain; its full sequence is MTNIHYHKILILDFGSQYTQLIARRVREIGVYCELWAWDVTEQXIREFAPELYQGRAFKSYRGMGSLGAMAKGSSDRYFQSDNAADKLVPEGIEGRIPYKGYLKEIIHQQMGGLRSCMGLTGCATIDELRTKAEFVRISGAGIKESHVHDVAITKEAPNYRMG.

Belongs to the IMPDH/GMPR family.

This is an uncharacterized protein from Haemophilus influenzae (strain ATCC 51907 / DSM 11121 / KW20 / Rd).